The following is a 289-amino-acid chain: Rhodopsin (289 aa).

Over 1–7 (YLVNPAA) the chain is Extracellular. A helical membrane pass occupies residues 8 to 32 (YAALGAYMFLLILIGFPINFLTLYV). Over 33 to 44 (TLEHKKLRTPLN) the chain is Cytoplasmic. A helical membrane pass occupies residues 45–67 (YILLNLAVANLFMVLGGFTTTMY). The Extracellular segment spans residues 68–81 (TSMHGYFVLGRLGC). C81 and C158 are oxidised to a cystine. The helical transmembrane segment at 82 to 104 (NLEAFFATLGGEIALWSLVVLAI) threads the bilayer. The short motif at 105–107 (ERW) is the 'Ionic lock' involved in activated form stabilization element. Residues 105-123 (ERWIVVCKPISNFRFTEDH) are Cytoplasmic-facing. A helical transmembrane segment spans residues 124-144 (AIMGLAFTWVMALACAVPPLV). Residues 145–173 (GWSRYIPEGMQCSCGVDYYTRAEGFNNES) are Extracellular-facing. N171 is a glycosylation site (N-linked (GlcNAc...) asparagine). A helical membrane pass occupies residues 174–195 (FVIYMFIVHFLIPLSVIFFCYG). Over 196–223 (RLLCAVKEAPAAQQESETTQRAEKEVSR) the chain is Cytoplasmic. Residues 224–245 (MVVIMVIGFLVCWLPYASVAWW) form a helical membrane-spanning segment. At 246–257 (IFCNQGSDFGPI) the chain is on the extracellular side. The chain crosses the membrane as a helical span at residues 258 to 279 (FMTLPSFFAKSAAIYNPMIYIC). K267 bears the N6-(retinylidene)lysine mark. Residues 280–289 (MNKQFRHCMI) are Cytoplasmic-facing.

Belongs to the G-protein coupled receptor 1 family. Opsin subfamily. Post-translationally, phosphorylated on some or all of the serine and threonine residues present in the C-terminal region. In terms of processing, contains one covalently linked retinal chromophore.

The protein localises to the membrane. It is found in the cell projection. Its subcellular location is the cilium. The protein resides in the photoreceptor outer segment. In terms of biological role, photoreceptor required for image-forming vision at low light intensity. While most salt water fish species use retinal as chromophore, most freshwater fish use 3-dehydroretinal, or a mixture of retinal and 3-dehydroretinal. Light-induced isomerization of 11-cis to all-trans retinal triggers a conformational change that activates signaling via G-proteins. Subsequent receptor phosphorylation mediates displacement of the bound G-protein alpha subunit by arrestin and terminates signaling. The protein is Rhodopsin (rho) of Abyssocottus korotneffi (Baikalian deep-water sculpin).